The chain runs to 355 residues: Fructose-1,6-bisphosphatase (355 aa).

Residues 25 to 30 (ILDQQH) and 37 to 41 (TGEFS) contribute to the AMP site. 2 residues coordinate Mg(2+): aspartate 78 and glutamate 107. 121–122 (KY) serves as a coordination point for AMP. Residues aspartate 127, isoleucine 129, and aspartate 130 each coordinate Mg(2+). 130–133 (DGSS) lines the substrate pocket. AMP is bound at residue lysine 149. Residues 230–233 (NEGN), 263–268 (RYIGSM), tyrosine 284, and 294–296 (KLR) each bind substrate. Glutamate 300 is a Mg(2+) binding site.

It belongs to the FBPase class 1 family. Homotetramer. It depends on Mg(2+) as a cofactor.

The enzyme catalyses beta-D-fructose 1,6-bisphosphate + H2O = beta-D-fructose 6-phosphate + phosphate. It functions in the pathway carbohydrate biosynthesis; gluconeogenesis. With respect to regulation, subject to complex allosteric regulation. The enzyme can assume an active R-state, or an inactive T-state. Intermediate conformations may exist. AMP acts as allosteric inhibitor. AMP binding affects the turnover of bound substrate and not the affinity for substrate. This chain is Fructose-1,6-bisphosphatase (FBP1), found in Kluyveromyces lactis (strain ATCC 8585 / CBS 2359 / DSM 70799 / NBRC 1267 / NRRL Y-1140 / WM37) (Yeast).